Here is a 393-residue protein sequence, read N- to C-terminus: Phosphoglycerate kinase (393 aa).

Substrate is bound by residues aspartate 21 to asparagine 23, arginine 36, histidine 59 to arginine 62, arginine 114, and arginine 147. ATP contacts are provided by residues lysine 198, glutamate 320, and glycine 346–threonine 349.

Belongs to the phosphoglycerate kinase family. In terms of assembly, monomer.

It localises to the cytoplasm. The catalysed reaction is (2R)-3-phosphoglycerate + ATP = (2R)-3-phospho-glyceroyl phosphate + ADP. It participates in carbohydrate degradation; glycolysis; pyruvate from D-glyceraldehyde 3-phosphate: step 2/5. This Methylobacillus flagellatus (strain ATCC 51484 / DSM 6875 / VKM B-1610 / KT) protein is Phosphoglycerate kinase.